The sequence spans 226 residues: Putative 5'-nucleotidase alr3139 (226 aa).

4 residues coordinate a divalent metal cation: D8, D9, S38, and N89.

It belongs to the SurE nucleotidase family. A divalent metal cation serves as cofactor.

It is found in the cytoplasm. It carries out the reaction a ribonucleoside 5'-phosphate + H2O = a ribonucleoside + phosphate. Functionally, nucleotidase that shows phosphatase activity on nucleoside 5'-monophosphates. The sequence is that of Putative 5'-nucleotidase alr3139 from Nostoc sp. (strain PCC 7120 / SAG 25.82 / UTEX 2576).